Reading from the N-terminus, the 199-residue chain is Putative acetyltransferase SAR2635 (199 aa).

This sequence belongs to the transferase hexapeptide repeat family.

The protein is Putative acetyltransferase SAR2635 of Staphylococcus aureus (strain MRSA252).